The primary structure comprises 384 residues: Omega-6 fatty acid desaturase, endoplasmic reticulum (384 aa).

The disordered stretch occupies residues 1–23 (MGAGGRMQVSPSPKKSETDTLKR). The span at 14-23 (KKSETDTLKR) shows a compositional bias: basic and acidic residues. 2 helical membrane passes run 56 to 76 (LIWD…YFPL) and 84 to 104 (VAWP…WVIA). A Histidine box-1 motif is present at residues 105–109 (HECGH). Residues 117-137 (WLDDTVGLIFHSFLLVPYFSW) form a helical membrane-spanning segment. The Histidine box-2 signature appears at 141 to 145 (HRRHH). A run of 3 helical transmembrane segments spans residues 180-200 (VMLT…NVSG), 226-246 (IYVS…YAAA), and 253-273 (VCLY…ITYL). The short motif at 316–320 (HVAHH) is the Histidine box-3 element.

The protein belongs to the fatty acid desaturase type 1 family.

Its subcellular location is the endoplasmic reticulum membrane. It functions in the pathway lipid metabolism; polyunsaturated fatty acid biosynthesis. Functionally, ER (microsomal) omega-6 fatty acid desaturase introduces the second double bond in the biosynthesis of 18:3 fatty acids, important constituents of plant membranes. It is thought to use cytochrome b5 as an electron donor and to act on fatty acids esterified to phosphatidylcholine and, possibly, other phospholipids. The chain is Omega-6 fatty acid desaturase, endoplasmic reticulum from Brassica juncea (Indian mustard).